We begin with the raw amino-acid sequence, 253 residues long: Leucyl/phenylalanyl-tRNA--protein transferase (253 aa).

This sequence belongs to the L/F-transferase family.

Its subcellular location is the cytoplasm. It catalyses the reaction N-terminal L-lysyl-[protein] + L-leucyl-tRNA(Leu) = N-terminal L-leucyl-L-lysyl-[protein] + tRNA(Leu) + H(+). It carries out the reaction N-terminal L-arginyl-[protein] + L-leucyl-tRNA(Leu) = N-terminal L-leucyl-L-arginyl-[protein] + tRNA(Leu) + H(+). The enzyme catalyses L-phenylalanyl-tRNA(Phe) + an N-terminal L-alpha-aminoacyl-[protein] = an N-terminal L-phenylalanyl-L-alpha-aminoacyl-[protein] + tRNA(Phe). In terms of biological role, functions in the N-end rule pathway of protein degradation where it conjugates Leu, Phe and, less efficiently, Met from aminoacyl-tRNAs to the N-termini of proteins containing an N-terminal arginine or lysine. The polypeptide is Leucyl/phenylalanyl-tRNA--protein transferase (Bordetella petrii (strain ATCC BAA-461 / DSM 12804 / CCUG 43448)).